The sequence spans 118 residues: UPF0102 protein Francci3_3586 (118 aa).

This sequence belongs to the UPF0102 family.

In Frankia casuarinae (strain DSM 45818 / CECT 9043 / HFP020203 / CcI3), this protein is UPF0102 protein Francci3_3586.